Consider the following 650-residue polypeptide: MIKITFPDGAVREYQAGVTTFEIAESISKSLAKKALAGKFNGKLIDTTRAIDEDGTLEIVMPDHDDALDILRHSAAHLFAQAARRLFPDIKLGVGPAIQDGFYYDTDNAAGQISNEDLPRIQEEMMKIVKENFPSERREVTKEEALEIFKNDPYKLELIHEHSDDEGGLTIYTQGEYVDLCRGPHVPSTGRIQIFELLNVAGAYWRGKSENPMMQRVYGTAWFDKKDLKAYLQMREEAKERDHRKLGKELDLFMISQEVGQGLPFWLPNGATIRRTLERYITDKELASGYQHVYTPPLASVELYKTSGHWEHYSEDMFPTMDMGDGEEFVLRPMNCPHHIQVYKNHVRSYRELPVRIAELGMMHRYEKSGALTGLQRVREMTLNDGHIFVTPEQIQEEFKKALQLIIDVYADFNLNDYRFRLSYRDPEDKEKYYDNDEMWENAQRMLKGAMDEMGVDYFEAEGEAAFYGPKLDIQVKTALGNEETLSTIQLDFLLPERFGLTYIGADGEEHRPVMIHRGVISTMERFTAILIETYKGAFPTWLAPTQVTMIPISVEAHLDYAWKVAKELQDRGVRVHVDERNEKMQYKIRQSQTSKIPYQLIVGDKEMEDNAVNVRRYGSKATQTQSVSEFVDHILADIARKSRPAEAAE.

Residues 1-61 (MIKITFPDGA…DEDGTLEIVM (61 aa)) form the TGS domain. The segment at 242–540 (DHRKLGKELD…LIETYKGAFP (299 aa)) is catalytic. Residues cysteine 336, histidine 387, and histidine 517 each coordinate Zn(2+).

Belongs to the class-II aminoacyl-tRNA synthetase family. Homodimer. It depends on Zn(2+) as a cofactor.

It is found in the cytoplasm. The enzyme catalyses tRNA(Thr) + L-threonine + ATP = L-threonyl-tRNA(Thr) + AMP + diphosphate + H(+). Catalyzes the attachment of threonine to tRNA(Thr) in a two-step reaction: L-threonine is first activated by ATP to form Thr-AMP and then transferred to the acceptor end of tRNA(Thr). Also edits incorrectly charged L-seryl-tRNA(Thr). In Streptococcus suis (strain 98HAH33), this protein is Threonine--tRNA ligase.